We begin with the raw amino-acid sequence, 807 residues long: MHIFVPKLLENHQFSSISSSKDFVAVSAETNVYILSKDFFYPKSSEKRIIQSLNGHKTTHLSFDSPISCIRFTYDGSCLAVATEAGTFLYHSEKWDKAFQVLSGPAYEVCWSQQGHILATSWKQISIYVKDEGLRTETIVKKTEHADSNHQPAVSIEESKEAVESTSQSSEISFKLIKVIEGHHTFVGGLAFDPMGQFLASQSFDHTLKVWKLSTFGVEKSIAKPFEQMPTGNRFLRLSWSPDGAHIASVNAVNEGAYVIAIVQRDTWTYDINLVGHQGPLECATFNPYLYEDPFQKSIIASAAHDGCVSIWNTACARPMAVIHELSCSSFVDLQWSTSGFELYGVSLDGNLMLLQFEESEFGEKMDTIHYPDDLSYFNSSRSKAHVNKNAAADRTTSPTQGQPESPSKSILLRPPPSIASSPESKRRKCPKKFVARPPVPHPTSLYSQIRIGCPYLKPKLVISKSFGTLIVKNHNQLSLLKCTFSNLDGNDCSWFSYLPNAIVLANGTSVFWAVATEDSSIYIYSPAGRLLLPPVVVAATPCFLECCGDFLCCIVSTGLLYIWNIKNFEAIHSPVSTLPLFHSNFSVSKIARGPSIEQFFVTKQGHPVAIMSDGNAFAFIRDSSSWLRVSEGWWMIGSQYWGPLASESNEESPLGFLERCTDEEIIKAGRGRFLQRLVKALMLRQGYDNYEMLVSIRHLENRLMSSAKLDLEYDFRENLILYAKKIAEEGMKDKMDELCKELLGPLRIPHNGIDTVKVGNRLWSPTIAGNNKRNLLKDIIIHTAKYRDMQRITSQYSDLLRRSALL.

WD repeat units lie at residues 62–100 (SFDSPISCIRFTYDGSCLAVATEAGTFLYHSEKWDKAFQ) and 102–140 (LSGPAYEVCWSQQGHILATSWKQISIYVKDEGLRTETIV). The segment at 144-164 (EHADSNHQPAVSIEESKEAVE) is disordered. 4 WD repeats span residues 182 to 221 (GHHTFVGGLAFDPMGQFLASQSFDHTLKVWKLSTFGVEKS), 230 to 273 (PTGN…YDIN), 276 to 322 (GHQG…PMAV), and 326 to 367 (LSCS…EKMD). The disordered stretch occupies residues 388-437 (NKNAAADRTTSPTQGQPESPSKSILLRPPPSIASSPESKRRKCPKKFVAR). Residues 395–409 (RTTSPTQGQPESPSK) are compositionally biased toward polar residues. Phosphoserine occurs at positions 406, 421, and 422. Residues 426–435 (KRRKCPKKFV) are compositionally biased toward basic residues. WD repeat units lie at residues 492–526 (DCSWFSYLPNAIVLANGTSVFWAVATEDSSIYIYS) and 528–574 (AGRL…AIHS).

This sequence belongs to the WD repeat HIR1 family. Interacts with hip1 and hip3.

Its subcellular location is the cytoplasm. It localises to the nucleus. Functionally, probably required for replication-independent chromatin assembly. Required for transcriptional silencing in the outer repeat (otr) centromeric repeats and the Tf2 long terminal repeat retrotransposons. May play an indirect role in the regulation of cdc2 and/or wee1 at the G2/M stage of mitosis. The sequence is that of Histone transcription regulator slm9 (slm9) from Schizosaccharomyces pombe (strain 972 / ATCC 24843) (Fission yeast).